The sequence spans 158 residues: C-type lectin (158 aa).

A signal peptide spans 1 to 23; that stretch reads MGHFTFISLCLMPIFLSLSGAEC. Disulfide bonds link Cys-26/Cys-37, Cys-54/Cys-154, Cys-61/Cys-156, and Cys-129/Cys-146. Residues 33–155 enclose the C-type lectin domain; it reads RNGLCYKLFD…CESLFAFICR (123 aa). Residues Asn-111 and Asn-121 are each glycosylated (N-linked (GlcNAc...) asparagine). The Mannose-binding signature appears at 119 to 121; it reads EPN. Positions 127, 142, and 143 each coordinate Ca(2+).

Belongs to the true venom lectin family. In terms of assembly, homodimer; non-covalently linked. As to expression, expressed by the venom gland.

It is found in the secreted. In terms of biological role, mannose-binding lectin which recognizes specific carbohydrate structures and agglutinates a variety of animal cells by binding to cell-surface glycoproteins and glycolipids. May be a calcium-dependent lectin. This Micrurus corallinus (Brazilian coral snake) protein is C-type lectin.